The chain runs to 444 residues: Chromosome partition protein MukF (444 aa).

Residues 212 to 240 (LDETSGNLRELQDTLNAAGDKLQAQLLRI) are leucine-zipper.

The protein belongs to the MukF family. As to quaternary structure, interacts, and probably forms a ternary complex, with MukE and MukB via its C-terminal region. The complex formation is stimulated by calcium or magnesium. It is required for an interaction between MukE and MukB.

The protein localises to the cytoplasm. It localises to the nucleoid. Functionally, involved in chromosome condensation, segregation and cell cycle progression. May participate in facilitating chromosome segregation by condensation DNA from both sides of a centrally located replisome during cell division. Not required for mini-F plasmid partitioning. Probably acts via its interaction with MukB and MukE. Overexpression results in anucleate cells. It has a calcium binding activity. This Haemophilus influenzae (strain PittEE) protein is Chromosome partition protein MukF.